Here is a 325-residue protein sequence, read N- to C-terminus: Replication factor C small subunit (325 aa).

54–61 (GPAGTGKT) contacts ATP.

Belongs to the activator 1 small subunits family. RfcS subfamily. Heteromultimer composed of small subunits (RfcS) and large subunits (RfcL).

In terms of biological role, part of the RFC clamp loader complex which loads the PCNA sliding clamp onto DNA. In Haloarcula marismortui (strain ATCC 43049 / DSM 3752 / JCM 8966 / VKM B-1809) (Halobacterium marismortui), this protein is Replication factor C small subunit.